The sequence spans 466 residues: Alpha-1A adrenergic receptor (466 aa).

Residues 1 to 27 lie on the Extracellular side of the membrane; sequence MVFLSGNASDSSNCTHPPPPVNISKAI. N-linked (GlcNAc...) asparagine glycans are attached at residues Asn-7, Asn-13, and Asn-22. A helical membrane pass occupies residues 28-51; it reads LLGVILGGLILFGVLGNILVILSV. Over 52 to 64 the chain is Cytoplasmic; that stretch reads ACHRHLHSVTHYY. Residues 65-88 form a helical membrane-spanning segment; that stretch reads IVNLAVADLLLTSTVLPFSAIFEI. At 89–99 the chain is on the extracellular side; the sequence is LGYWAFGRVFC. Cys-99 and Cys-176 form a disulfide bridge. A helical transmembrane segment spans residues 100-122; sequence NVWAAVDVLCCTASIMGLCIISI. The Cytoplasmic segment spans residues 123 to 143; it reads DRYIGVSYPLRYPTIVTQKRG. The chain crosses the membrane as a helical span at residues 144–167; sequence LMALLCVWALSLVISIGPLFGWRQ. Residues 168–181 lie on the Extracellular side of the membrane; that stretch reads PAPEDETICQINEE. A helical membrane pass occupies residues 182-205; the sequence is PGYVLFSALGSFYVPLTIILVMYC. Residues 206–273 lie on the Cytoplasmic side of the membrane; that stretch reads RVYVVAKRES…FSREKKAAKT (68 aa). Ser-215 carries the post-translational modification Phosphoserine; by PKA. Residues 274-297 form a helical membrane-spanning segment; sequence LGIVVGCFVLCWLPFFLVMPIGSF. Residues 298 to 305 are Extracellular-facing; the sequence is FPDFRPSE. A helical transmembrane segment spans residues 306 to 329; that stretch reads TVFKIAFWLGYLNSCINPIIYPCS. At 330–466 the chain is on the cytoplasmic side; the sequence is SQEFKKAFQN…ISLSENGEEV (137 aa). The short motif at 334 to 349 is the Nuclear localization signal element; it reads KKAFQNVLRIQCLRRK. Cys-345 carries S-palmitoyl cysteine lipidation.

This sequence belongs to the G-protein coupled receptor 1 family. Adrenergic receptor subfamily. ADRA1A sub-subfamily. Homo- and heterooligomer. Heterooligomerizes with ADRA1B homooligomers in cardiac myocytes. Interacts with CAVIN4.

It is found in the nucleus membrane. Its subcellular location is the cell membrane. The protein resides in the cytoplasm. It localises to the membrane. The protein localises to the caveola. Its function is as follows. This alpha-adrenergic receptor mediates its action by association with G proteins that activate a phosphatidylinositol-calcium second messenger system. Its effect is mediated by G(q) and G(11) proteins. Nuclear ADRA1A-ADRA1B heterooligomers regulate phenylephrine (PE)-stimulated ERK signaling in cardiac myocytes. This Bos taurus (Bovine) protein is Alpha-1A adrenergic receptor (ADRA1A).